The chain runs to 80 residues: Defensin-like protein 46 (80 aa).

The N-terminal stretch at Met-1–Ala-27 is a signal peptide. Intrachain disulfides connect Cys-40-Cys-78, Cys-44-Cys-65, Cys-50-Cys-76, and Cys-54-Cys-77.

It belongs to the DEFL family.

It is found in the secreted. The sequence is that of Defensin-like protein 46 from Arabidopsis thaliana (Mouse-ear cress).